The following is a 508-amino-acid chain: Photosystem II CP47 reaction center protein (508 aa).

6 helical membrane passes run 21–36, 101–115, 140–156, 203–218, 237–252, and 457–472; these read SVHI…WAGS, IVFS…IWHW, GIHL…FGAF, IAAG…FHLS, VLSS…AFVV, and SFAL…HGAR.

This sequence belongs to the PsbB/PsbC family. PsbB subfamily. As to quaternary structure, PSII is composed of 1 copy each of membrane proteins PsbA, PsbB, PsbC, PsbD, PsbE, PsbF, PsbH, PsbI, PsbJ, PsbK, PsbL, PsbM, PsbT, PsbX, PsbY, PsbZ, Psb30/Ycf12, at least 3 peripheral proteins of the oxygen-evolving complex and a large number of cofactors. It forms dimeric complexes. The cofactor is Binds multiple chlorophylls. PSII binds additional chlorophylls, carotenoids and specific lipids..

It localises to the plastid. The protein resides in the chloroplast thylakoid membrane. Its function is as follows. One of the components of the core complex of photosystem II (PSII). It binds chlorophyll and helps catalyze the primary light-induced photochemical processes of PSII. PSII is a light-driven water:plastoquinone oxidoreductase, using light energy to abstract electrons from H(2)O, generating O(2) and a proton gradient subsequently used for ATP formation. This Barbarea verna (Land cress) protein is Photosystem II CP47 reaction center protein.